We begin with the raw amino-acid sequence, 131 residues long: Period circadian protein (131 aa).

The interval 29–109 (VTAPVELDPP…NSAGGASGGV (81 aa)) is disordered. Residues 71 to 93 (SGNFTTGSNVRMSSVTNTSNAGT) are compositionally biased toward low complexity. Over residues 94-109 (GTSGGGNSAGGASGGV) the composition is skewed to gly residues.

Forms a heterodimer with timeless (TIM); the complex then translocates into the nucleus. Phosphorylated with a circadian rhythmicity, probably by the double-time protein (dbt). Phosphorylation could be implicated in the stability of per monomer and in the formation of heterodimer per-tim.

Its subcellular location is the nucleus. It is found in the cytoplasm. The protein resides in the perinuclear region. Functionally, essential for biological clock functions. Determines the period length of circadian and ultradian rhythms; an increase in PER dosage leads to shortened circadian rhythms and a decrease leads to lengthened circadian rhythms. Essential for the circadian rhythmicity of locomotor activity, eclosion behavior, and for the rhythmic component of the male courtship song that originates in the thoracic nervous system. The biological cycle depends on the rhythmic formation and nuclear localization of the TIM-PER complex. Light induces the degradation of TIM, which promotes elimination of PER. Nuclear activity of the heterodimer coordinatively regulates PER and TIM transcription through a negative feedback loop. Behaves as a negative element in circadian transcriptional loop. Does not appear to bind DNA, suggesting indirect transcriptional inhibition. This Zaprionus tuberculatus (Vinegar fly) protein is Period circadian protein (per).